The primary structure comprises 238 residues: Lytic polysaccharide monooxygenase NCU01050 (238 aa).

Positions 1–15 (MKVLAPLVLASAASA) are cleaved as a signal peptide. Cu(2+) is bound at residue H16. E45 contributes to the O2 binding site. Disulfide bonds link C54–C186 and C156–C238. N-linked (GlcNAc...) asparagine glycosylation occurs at N75. Residue H99 participates in Cu(2+) binding. H172 and Q181 together coordinate O2. Catalysis depends on H172, which acts as the Proton donor. Y183 contacts Cu(2+).

It belongs to the polysaccharide monooxygenase AA9 family. As to quaternary structure, monomer. It depends on Cu(2+) as a cofactor. Post-translationally, N-linked glycans containing mannose and N-acetylglucosamine.

It localises to the secreted. The catalysed reaction is [(1-&gt;4)-beta-D-glucosyl]n+m + reduced acceptor + O2 = 4-dehydro-beta-D-glucosyl-[(1-&gt;4)-beta-D-glucosyl]n-1 + [(1-&gt;4)-beta-D-glucosyl]m + acceptor + H2O.. Its pathway is glycan metabolism; cellulose degradation. Its activity is regulated as follows. Inhibited by increasing levels of ascorbic acid. Functionally, catalyzes the oxidative cleavage of glycosidic bonds in cellulosic substrates via a copper-dependent mechanism. In the presence of an exogenous reductant ascorbic acid, degrades phosphoric acid swollen cellulose (PASC) to cello-oligosaccharides and 4-ketoaldoses, the end products oxidized at the non-reducing end. Somewhat active toward tamarind xyloglucan and konjac glucomannan, with improved activity with glucomannan in the presence of PASC. H(2)O(2) is able to substitute for O(2) in reactions with PASC, xyloglucan and glucomannan. Very weak activity on cellopentaose. No activity with birchwood xylan or ivory nut mannan. Disrupts plant cell wall polysaccharide substrates, such as recalcitrant crystalline cellulose. This is Lytic polysaccharide monooxygenase NCU01050 from Neurospora crassa (strain ATCC 24698 / 74-OR23-1A / CBS 708.71 / DSM 1257 / FGSC 987).